We begin with the raw amino-acid sequence, 230 residues long: MISPIKNIKNVFPINTANTEYIVRNIYPRVEHGYFNESPNIYDKKYISGITRSMAQLKIEEFINEKSRRLNYMKTMYSPCPEDFQPISRDEASIPEGSWLTVISGKRPMGQFSVDSLYHPDLHALCELPEISCKIFPKENSDFLYIIVVFRNDSPQGELRANRFIELYDIKREIMQVLRDESPELKSIKSEIIIAREMGELFSYASEEIDSYIKQMNDRFSQIKARMSVT.

Residues 49-52 (GITR) are interaction with host proteins TAB2, TAB3 and ZRANB3. 6 residues coordinate S-adenosyl-L-methionine: alanine 92, serine 98, arginine 107, glutamine 111, tyrosine 204, and glutamate 208.

Belongs to the NleE/OspZ family. In terms of assembly, monomer.

The protein resides in the secreted. It is found in the host cytoplasm. Its subcellular location is the host nucleus. The catalysed reaction is L-cysteinyl-[protein] + S-adenosyl-L-methionine = S-methyl-L-cysteinyl-[protein] + S-adenosyl-L-homocysteine + H(+). In terms of biological role, cysteine methyltransferase effector that inhibits host cell NF-kappa-B activation by preventing nuclear translocation of host protein RELA/p65. Acts by mediating cysteine methylation of host proteins TAB2 and TAB3: methylation of a conserved cysteine residue of the RanBP2-type zinc finger (NZF) of TAB2 and TAB3 disrupts zinc-binding, thereby inactivating the ubiquitin chain-binding activity of TAB2 and TAB3, leading to NF-kappa-B inactivation. Also mediates cysteine methylation of host protein ZRANB3, inactivating its ability to bind ubiquitin chains. This Shigella flexneri protein is Cysteine S-methyltransferase OspZ.